A 177-amino-acid polypeptide reads, in one-letter code: Ribosome maturation factor RimM (177 aa).

In terms of domain architecture, PRC barrel spans glycine 104 to methionine 177.

It belongs to the RimM family. Binds ribosomal protein uS19.

The protein localises to the cytoplasm. Functionally, an accessory protein needed during the final step in the assembly of 30S ribosomal subunit, possibly for assembly of the head region. Essential for efficient processing of 16S rRNA. May be needed both before and after RbfA during the maturation of 16S rRNA. It has affinity for free ribosomal 30S subunits but not for 70S ribosomes. The chain is Ribosome maturation factor RimM from Magnetococcus marinus (strain ATCC BAA-1437 / JCM 17883 / MC-1).